We begin with the raw amino-acid sequence, 139 residues long: I-Kappa-B like protein N1 (139 aa).

ANK repeat units follow at residues Asn-16–Leu-48, Glu-54–Gly-87, and Thr-92–Ala-122.

This sequence belongs to the polydnaviridae I-Kappa-B-like protein family.

In terms of biological role, suppresses the host immune response through NF-kappa-B inactivation. Possesses ankyrin repeat domain required for NF-kappa-B binding but lack the regulatory regions required for dissociation from NF-kappa-B and degradation. Therefore, prevents host NF-kappa-B release and subsequent activation. This chain is I-Kappa-B like protein N1 (N2), found in Microplitis demolitor bracovirus (isolate Webb) (MdBV).